The sequence spans 377 residues: Nitric oxide reductase FlRd-NAD(+) reductase (377 aa).

This sequence belongs to the FAD-dependent oxidoreductase family. Requires FAD as cofactor.

The protein localises to the cytoplasm. It carries out the reaction 2 reduced [nitric oxide reductase rubredoxin domain] + NAD(+) + H(+) = 2 oxidized [nitric oxide reductase rubredoxin domain] + NADH. It functions in the pathway nitrogen metabolism; nitric oxide reduction. Its function is as follows. One of at least two accessory proteins for anaerobic nitric oxide (NO) reductase. Reduces the rubredoxin moiety of NO reductase. This chain is Nitric oxide reductase FlRd-NAD(+) reductase, found in Klebsiella pneumoniae (strain 342).